The chain runs to 380 residues: Cystathionine beta-lyase (380 aa).

N6-(pyridoxal phosphate)lysine is present on K196.

The protein belongs to the trans-sulfuration enzymes family. Requires pyridoxal 5'-phosphate as cofactor.

The protein resides in the cytoplasm. It catalyses the reaction L,L-cystathionine + H2O = L-homocysteine + pyruvate + NH4(+). It carries out the reaction an S-substituted L-cysteine + H2O = a thiol + pyruvate + NH4(+). The protein operates within amino-acid biosynthesis; L-methionine biosynthesis via de novo pathway; L-homocysteine from L-cystathionine: step 1/1. In terms of biological role, the enzymatic degradation of amino acids in cheese is believed to generate aroma compounds and therefore to be essential for flavor development. Cystathionine beta-lyase (CBL) can convert cystathionine to homocysteine but is also able to catalyze an alpha, gamma elimination. With methionine as a substrate, it produces volatile sulfur compounds which are important for flavor formation in Gouda cheese. This Lactococcus lactis subsp. cremoris (Streptococcus cremoris) protein is Cystathionine beta-lyase (metC).